Reading from the N-terminus, the 517-residue chain is Cytochrome P450 1A1 (517 aa).

Residues 34 to 45 are mitochondrial targeting signal; sequence WQPRVPKGLKSP. Ser-72 carries O-linked (GlcNAc) serine glycosylation. Substrate is bound at residue Phe-229. Cys-462 is a heme binding site.

It belongs to the cytochrome P450 family. As to quaternary structure, interacts with cytosolic chaperones HSP70 and HSP90; this interaction is required for initial targeting to mitochondria. Interacts (via mitochondrial targeting signal) with TOMM40 (via N-terminus); this interaction is required for translocation across the mitochondrial outer membrane. Heme is required as a cofactor.

The protein resides in the endoplasmic reticulum membrane. It is found in the mitochondrion inner membrane. It localises to the microsome membrane. Its subcellular location is the cytoplasm. The catalysed reaction is an organic molecule + reduced [NADPH--hemoprotein reductase] + O2 = an alcohol + oxidized [NADPH--hemoprotein reductase] + H2O + H(+). It catalyses the reaction estrone + reduced [NADPH--hemoprotein reductase] + O2 = 2-hydroxyestrone + oxidized [NADPH--hemoprotein reductase] + H2O + H(+). The enzyme catalyses estrone + reduced [NADPH--hemoprotein reductase] + O2 = 4-hydroxyestrone + oxidized [NADPH--hemoprotein reductase] + H2O + H(+). It carries out the reaction estrone + reduced [NADPH--hemoprotein reductase] + O2 = 6alpha-hydroxyestrone + oxidized [NADPH--hemoprotein reductase] + H2O + H(+). The catalysed reaction is estrone + reduced [NADPH--hemoprotein reductase] + O2 = 15alpha-hydroxyestrone + oxidized [NADPH--hemoprotein reductase] + H2O + H(+). It catalyses the reaction estrone + reduced [NADPH--hemoprotein reductase] + O2 = 16alpha-hydroxyestrone + oxidized [NADPH--hemoprotein reductase] + H2O + H(+). The enzyme catalyses 17beta-estradiol + reduced [NADPH--hemoprotein reductase] + O2 = 2-hydroxy-17beta-estradiol + oxidized [NADPH--hemoprotein reductase] + H2O + H(+). It carries out the reaction 17beta-estradiol + reduced [NADPH--hemoprotein reductase] + O2 = 4-hydroxy-17beta-estradiol + oxidized [NADPH--hemoprotein reductase] + H2O + H(+). The catalysed reaction is 17beta-estradiol + reduced [NADPH--hemoprotein reductase] + O2 = 6alpha-hydroxy-17beta-estradiol + oxidized [NADPH--hemoprotein reductase] + H2O + H(+). It catalyses the reaction 17beta-estradiol + reduced [NADPH--hemoprotein reductase] + O2 = 7alpha-hydroxy-17beta-estradiol + oxidized [NADPH--hemoprotein reductase] + H2O + H(+). The enzyme catalyses 17beta-estradiol + reduced [NADPH--hemoprotein reductase] + O2 = 15alpha-hydroxy-17beta-estradiol + oxidized [NADPH--hemoprotein reductase] + H2O + H(+). It carries out the reaction (5Z,8Z,11Z)-eicosatrienoate + reduced [NADPH--hemoprotein reductase] + O2 = 19-hydroxy-(5Z,8Z,11Z)-eicosatrienoate + oxidized [NADPH--hemoprotein reductase] + H2O + H(+). The catalysed reaction is (5Z,8Z,11Z,14Z)-eicosatetraenoate + reduced [NADPH--hemoprotein reductase] + O2 = 16-hydroxy-(5Z,8Z,11Z,14Z)-eicosatetraenoate + oxidized [NADPH--hemoprotein reductase] + H2O + H(+). It catalyses the reaction (5Z,8Z,11Z,14Z)-eicosatetraenoate + reduced [NADPH--hemoprotein reductase] + O2 = 17-hydroxy-(5Z,8Z,11Z,14Z)-eicosatetraenoate + oxidized [NADPH--hemoprotein reductase] + H2O + H(+). The enzyme catalyses (5Z,8Z,11Z,14Z)-eicosatetraenoate + reduced [NADPH--hemoprotein reductase] + O2 = 18-hydroxy-(5Z,8Z,11Z,14Z)-eicosatetraenoate + oxidized [NADPH--hemoprotein reductase] + H2O + H(+). It carries out the reaction (5Z,8Z,11Z,14Z)-eicosatetraenoate + reduced [NADPH--hemoprotein reductase] + O2 = 19-hydroxy-(5Z,8Z,11Z,14Z)-eicosatetraenoate + oxidized [NADPH--hemoprotein reductase] + H2O + H(+). The catalysed reaction is (5Z,8Z,11Z,14Z,17Z)-eicosapentaenoate + reduced [NADPH--hemoprotein reductase] + O2 = 19-hydroxy-(5Z,8Z,11Z,14Z,17Z)-eicosapentaenoate + oxidized [NADPH--hemoprotein reductase] + H2O + H(+). It catalyses the reaction (5Z,8Z,11Z,14Z)-eicosatetraenoate + reduced [NADPH--hemoprotein reductase] + O2 = (8R,9S)-epoxy-(5Z,11Z,14Z)-eicosatrienoate + oxidized [NADPH--hemoprotein reductase] + H2O + H(+). The enzyme catalyses (5Z,8Z,11Z,14Z)-eicosatetraenoate + reduced [NADPH--hemoprotein reductase] + O2 = (11R,12S)-epoxy-(5Z,8Z,14Z)-eicosatrienoate + oxidized [NADPH--hemoprotein reductase] + H2O + H(+). It carries out the reaction (5Z,8Z,11Z,14Z)-eicosatetraenoate + reduced [NADPH--hemoprotein reductase] + O2 = (14S,15R)-epoxy-(5Z,8Z,11Z)-eicosatrienoate + oxidized [NADPH--hemoprotein reductase] + H2O + H(+). The catalysed reaction is (5Z,8Z,11Z,14Z)-eicosatetraenoate + reduced [NADPH--hemoprotein reductase] + O2 = (14R,15S)-epoxy-(5Z,8Z,11Z)-eicosatrienoate + oxidized [NADPH--hemoprotein reductase] + H2O + H(+). It catalyses the reaction (5Z,8Z,11Z,14Z,17Z)-eicosapentaenoate + reduced [NADPH--hemoprotein reductase] + O2 = (17R,18S)-epoxy-(5Z,8Z,11Z,14Z)-eicosatetraenoate + oxidized [NADPH--hemoprotein reductase] + H2O + H(+). The enzyme catalyses (4Z,7Z,10Z,13Z,16Z,19Z)-docosahexaenoate + reduced [NADPH--hemoprotein reductase] + O2 = (19S,20R)-epoxy-(4Z,7Z,10Z,13Z,16Z)-docosapentaenoate + oxidized [NADPH--hemoprotein reductase] + H2O + H(+). It carries out the reaction (4Z,7Z,10Z,13Z,16Z,19Z)-docosahexaenoate + reduced [NADPH--hemoprotein reductase] + O2 = (19R,20S)-epoxy-(4Z,7Z,10Z,13Z,16Z)-docosapentaenoate + oxidized [NADPH--hemoprotein reductase] + H2O + H(+). The catalysed reaction is all-trans-retinol + reduced [NADPH--hemoprotein reductase] + O2 = all-trans-retinal + oxidized [NADPH--hemoprotein reductase] + 2 H2O + H(+). It catalyses the reaction all-trans-retinal + reduced [NADPH--hemoprotein reductase] + O2 = all-trans-retinoate + oxidized [NADPH--hemoprotein reductase] + H2O + 2 H(+). The enzyme catalyses (13S)-hydroperoxy-(9Z,11E)-octadecadienoate = 13-oxo-(9Z,11E)-octadecadienoate + H2O. It carries out the reaction (12S)-hydroperoxy-(5Z,8Z,10E,14Z)-eicosatetraenoate = 12-oxo-(5Z,8Z,10E,14Z)-eicosatetraenoate + H2O. The catalysed reaction is (15S)-hydroperoxy-(5Z,8Z,11Z,13E)-eicosatetraenoate = 15-oxo-(5Z,8Z,11Z,13E)-eicosatetraenoate + H2O. It catalyses the reaction (5S)-hydroperoxy-(6E,8Z,11Z,14Z)-eicosatetraenoate = 5-oxo-(6E,8Z,11Z,14Z)-eicosatetraenoate + H2O. Its pathway is steroid hormone biosynthesis. It participates in lipid metabolism; fatty acid metabolism. The protein operates within cofactor metabolism; retinol metabolism. A cytochrome P450 monooxygenase involved in the metabolism of various endogenous substrates, including fatty acids, steroid hormones and vitamins. Mechanistically, uses molecular oxygen inserting one oxygen atom into a substrate, and reducing the second into a water molecule, with two electrons provided by NADPH via cytochrome P450 reductase (CPR; NADPH-ferrihemoprotein reductase). Catalyzes the hydroxylation of carbon-hydrogen bonds. Exhibits high catalytic activity for the formation of hydroxyestrogens from estrone (E1) and 17beta-estradiol (E2), namely 2-hydroxy E1 and E2, as well as D-ring hydroxylated E1 and E2 at the C15alpha and C16alpha positions. Displays different regioselectivities for polyunsaturated fatty acids (PUFA) hydroxylation. Catalyzes the epoxidation of double bonds of certain PUFA. Converts arachidonic acid toward epoxyeicosatrienoic acid (EET) regioisomers, 8,9-, 11,12-, and 14,15-EET, that function as lipid mediators in the vascular system. Displays an absolute stereoselectivity in the epoxidation of eicosapentaenoic acid (EPA) producing the 17(R),18(S) enantiomer. May play an important role in all-trans retinoic acid biosynthesis in extrahepatic tissues. Catalyzes two successive oxidative transformation of all-trans retinol to all-trans retinal and then to the active form all-trans retinoic acid. May also participate in eicosanoids metabolism by converting hydroperoxide species into oxo metabolites (lipoxygenase-like reaction, NADPH-independent). The chain is Cytochrome P450 1A1 (CYP1A1) from Felis catus (Cat).